Here is a 362-residue protein sequence, read N- to C-terminus: MERITVNLAERSYPISIGAGLFEDPAYLSFLSGKQKVVVISNVTVAPLYADKILSLLDQVGCQTSLLELPDGEQYKNLETFNSVMSYMLEGNYSRDVVVIALGGGVIGDLVGFAASCYQRGIDFIQIPTTLLSQVDSSVGGKTAVNHPLGKNMIGAFYQPKSVIIDTNCLSTLPEREFAAGMAEVIKYGIIYDEAFFGWLEQNLEKLYQLDEDALITAIARCCAIKAEVVAIDEKESGIRALLNLGHTFGHAIEAELGYGNWLHGEAVSSGTVMAAKTAQLQGLISQQQLERIISILKNAKLPIHTPESMSFEDFMKHMMRDKKVLSGQLRLVLPTSIGTAEVVADVPQDIIKQAIDFCRTL.

NAD(+) contacts are provided by residues 71–76, 105–109, 129–130, lysine 142, lysine 151, and 169–172; these read DGEQYK, GVIGD, TT, and CLST. Glutamate 184, histidine 247, and histidine 264 together coordinate Zn(2+).

It belongs to the sugar phosphate cyclases superfamily. Dehydroquinate synthase family. Co(2+) is required as a cofactor. It depends on Zn(2+) as a cofactor. NAD(+) serves as cofactor.

The protein resides in the cytoplasm. The enzyme catalyses 7-phospho-2-dehydro-3-deoxy-D-arabino-heptonate = 3-dehydroquinate + phosphate. It participates in metabolic intermediate biosynthesis; chorismate biosynthesis; chorismate from D-erythrose 4-phosphate and phosphoenolpyruvate: step 2/7. Catalyzes the conversion of 3-deoxy-D-arabino-heptulosonate 7-phosphate (DAHP) to dehydroquinate (DHQ). This Vibrio atlanticus (strain LGP32) (Vibrio splendidus (strain Mel32)) protein is 3-dehydroquinate synthase.